Reading from the N-terminus, the 263-residue chain is Type III pantothenate kinase (263 aa).

ATP is bound at residue 6–13; sequence DVGNTRIK. Substrate contacts are provided by residues Tyr92 and 99-102; that span reads GTDR. Residue Asp101 is the Proton acceptor of the active site. Thr124 provides a ligand contact to ATP. Thr174 is a substrate binding site.

It belongs to the type III pantothenate kinase family. Homodimer. Requires NH4(+) as cofactor. It depends on K(+) as a cofactor.

The protein resides in the cytoplasm. It catalyses the reaction (R)-pantothenate + ATP = (R)-4'-phosphopantothenate + ADP + H(+). It participates in cofactor biosynthesis; coenzyme A biosynthesis; CoA from (R)-pantothenate: step 1/5. Catalyzes the phosphorylation of pantothenate (Pan), the first step in CoA biosynthesis. The sequence is that of Type III pantothenate kinase from Azoarcus sp. (strain BH72).